An 87-amino-acid chain; its full sequence is Small ribosomal subunit protein bS16 (87 aa).

Belongs to the bacterial ribosomal protein bS16 family.

The sequence is that of Small ribosomal subunit protein bS16 from Ehrlichia ruminantium (strain Gardel).